Here is a 366-residue protein sequence, read N- to C-terminus: Neutral protease 2 homolog MGYG_04094 (366 aa).

Residues 1–19 form the signal peptide; it reads MQILAALSAIGALVATATA. The propeptide occupies 20 to 188; the sequence is AAVPNAPAKQ…NKSRSTIDKR (169 aa). Intrachain disulfides connect Cys-196-Cys-267 and Cys-274-Cys-292. Position 317 (His-317) interacts with Zn(2+). Residue Glu-318 is part of the active site. Positions 321 and 332 each coordinate Zn(2+).

Belongs to the peptidase M35 family. Zn(2+) is required as a cofactor.

It localises to the secreted. It catalyses the reaction Preferential cleavage of bonds with hydrophobic residues in P1'. Also 3-Asn-|-Gln-4 and 8-Gly-|-Ser-9 bonds in insulin B chain.. Secreted metalloproteinase that allows assimilation of proteinaceous substrates. Shows high activities on basic nuclear substrates such as histone and protamine. May be involved in virulence. This Arthroderma gypseum (strain ATCC MYA-4604 / CBS 118893) (Microsporum gypseum) protein is Neutral protease 2 homolog MGYG_04094.